A 212-amino-acid polypeptide reads, in one-letter code: Calaxin (212 aa).

3 EF-hand domains span residues 65–100 (TDDM…FLRG), 101–136 (TLEE…SLLK), and 146–181 (GIKD…ETLL). Residues Asp78, Asp80, Asp82, Cys84, Glu89, Asp114, Asn116, Asp118, Glu125, Asp159, Asp161, Asp163, Lys165, and Asp170 each contribute to the Ca(2+) site.

As to quaternary structure, component of the outer dynein arm-docking complex along with ODAD1, ODAD2, ODAD3 and ODAD4. Expressed in trachea multiciliated cells.

Its subcellular location is the cytoplasm. It localises to the cytoskeleton. The protein resides in the cilium axoneme. It is found in the cell projection. The protein localises to the cilium. Its subcellular location is the flagellum. Its function is as follows. Component of the outer dynein arm-docking complex (ODA-DC) that mediates outer dynein arms (ODA) binding onto the doublet microtubule. Seems to regulate the assembly of both ODAs and their axonemal docking complex onto ciliary microtubules. Regulates ciliary and flagellar motility and is required for cilia-driven determination of body laterality. The polypeptide is Calaxin (CLXN) (Bos taurus (Bovine)).